A 373-amino-acid chain; its full sequence is Tryptophan--tRNA ligase (373 aa).

Residues 79-87 (PSGKFHFGH) carry the 'HIGH' region motif. The short motif at 257–261 (KMSSS) is the 'KMSKS' region element.

This sequence belongs to the class-I aminoacyl-tRNA synthetase family.

Its subcellular location is the cytoplasm. The catalysed reaction is tRNA(Trp) + L-tryptophan + ATP = L-tryptophyl-tRNA(Trp) + AMP + diphosphate + H(+). This chain is Tryptophan--tRNA ligase, found in Hyperthermus butylicus (strain DSM 5456 / JCM 9403 / PLM1-5).